The primary structure comprises 58 residues: UPF0434 protein Daro_3207 (58 aa).

The protein belongs to the UPF0434 family.

This chain is UPF0434 protein Daro_3207, found in Dechloromonas aromatica (strain RCB).